A 119-amino-acid chain; its full sequence is Ribonuclease P protein component (119 aa).

It belongs to the RnpA family. Consists of a catalytic RNA component (M1 or rnpB) and a protein subunit.

The enzyme catalyses Endonucleolytic cleavage of RNA, removing 5'-extranucleotides from tRNA precursor.. In terms of biological role, RNaseP catalyzes the removal of the 5'-leader sequence from pre-tRNA to produce the mature 5'-terminus. It can also cleave other RNA substrates such as 4.5S RNA. The protein component plays an auxiliary but essential role in vivo by binding to the 5'-leader sequence and broadening the substrate specificity of the ribozyme. The polypeptide is Ribonuclease P protein component (Dictyoglomus turgidum (strain DSM 6724 / Z-1310)).